A 239-amino-acid polypeptide reads, in one-letter code: Pyridoxine 5'-phosphate synthase (239 aa).

Asn-9 provides a ligand contact to 3-amino-2-oxopropyl phosphate. 11–12 (DH) provides a ligand contact to 1-deoxy-D-xylulose 5-phosphate. Arg-20 contacts 3-amino-2-oxopropyl phosphate. His-45 serves as the catalytic Proton acceptor. The 1-deoxy-D-xylulose 5-phosphate site is built by Arg-47 and His-52. The Proton acceptor role is filled by Glu-72. Thr-102 is a 1-deoxy-D-xylulose 5-phosphate binding site. Catalysis depends on His-189, which acts as the Proton donor. Residues Gly-190 and 211–212 (GH) contribute to the 3-amino-2-oxopropyl phosphate site.

Belongs to the PNP synthase family. As to quaternary structure, homooctamer; tetramer of dimers.

It is found in the cytoplasm. The enzyme catalyses 3-amino-2-oxopropyl phosphate + 1-deoxy-D-xylulose 5-phosphate = pyridoxine 5'-phosphate + phosphate + 2 H2O + H(+). It participates in cofactor biosynthesis; pyridoxine 5'-phosphate biosynthesis; pyridoxine 5'-phosphate from D-erythrose 4-phosphate: step 5/5. Its function is as follows. Catalyzes the complicated ring closure reaction between the two acyclic compounds 1-deoxy-D-xylulose-5-phosphate (DXP) and 3-amino-2-oxopropyl phosphate (1-amino-acetone-3-phosphate or AAP) to form pyridoxine 5'-phosphate (PNP) and inorganic phosphate. This is Pyridoxine 5'-phosphate synthase from Ehrlichia chaffeensis (strain ATCC CRL-10679 / Arkansas).